Here is a 255-residue protein sequence, read N- to C-terminus: D-aminoacyl-tRNA deacylase (255 aa).

The protein belongs to the DtdA deacylase family. Monomer. It depends on Zn(2+) as a cofactor.

The catalysed reaction is a D-aminoacyl-tRNA + H2O = a tRNA + a D-alpha-amino acid + H(+). It carries out the reaction glycyl-tRNA(Ala) + H2O = tRNA(Ala) + glycine + H(+). In terms of biological role, D-aminoacyl-tRNA deacylase with broad substrate specificity. By recycling D-aminoacyl-tRNA to D-amino acids and free tRNA molecules, this enzyme counteracts the toxicity associated with the formation of D-aminoacyl-tRNA entities in vivo. This is D-aminoacyl-tRNA deacylase from Methanocaldococcus jannaschii (strain ATCC 43067 / DSM 2661 / JAL-1 / JCM 10045 / NBRC 100440) (Methanococcus jannaschii).